A 339-amino-acid chain; its full sequence is Putative zinc metalloprotease CA_C1796 (339 aa).

Zn(2+) is bound at residue H20. E21 is a catalytic residue. H24 lines the Zn(2+) pocket. The next 3 membrane-spanning stretches (helical) occupy residues L91–G113, Q275–F297, and V310–I330. Positions I99–G177 constitute a PDZ domain.

Belongs to the peptidase M50B family. Zn(2+) is required as a cofactor.

It is found in the cell membrane. This is Putative zinc metalloprotease CA_C1796 from Clostridium acetobutylicum (strain ATCC 824 / DSM 792 / JCM 1419 / IAM 19013 / LMG 5710 / NBRC 13948 / NRRL B-527 / VKM B-1787 / 2291 / W).